Consider the following 376-residue polypeptide: uncharacterized protein (376 aa).

One can recognise a Peptidase M14 domain in the interval 82–372; the sequence is KIYDDSAVEK…ATSGILWRAL (291 aa). Zn(2+)-binding residues include His138, Glu141, and His283. Glu344 serves as the catalytic Proton donor/acceptor.

The protein belongs to the peptidase M14 family. Requires Zn(2+) as cofactor.

This is an uncharacterized protein from Bacillus subtilis (strain 168).